Consider the following 2265-residue polypeptide: Collagen alpha-6(VI) chain (2265 aa).

The first 18 residues, 1-18 (MLLVLCLTMICFHVCVNQ), serve as a signal peptide directing secretion. The segment at 19-1390 (DSGPEYADVV…TCCCLLCKCT (1372 aa)) is nonhelical region. VWFA domains follow at residues 26–205 (DVVF…IKDV), 228–406 (DVVF…LKKL), 435–605 (DIYL…RNQV), 621–790 (DIMF…EDDL), 808–981 (DVVF…FSDV), 999–1170 (DLVF…KKRI), and 1186–1378 (DVVV…INVA). 3 N-linked (GlcNAc...) asparagine glycosylation sites follow: N197, N238, and N346. N-linked (GlcNAc...) asparagine glycosylation is present at N760. The triple-helical region stretch occupies residues 1391-1724 (GGDGAMGDPG…GRKGVKGARG (334 aa)). The tract at residues 1398–1722 (DPGSAGKKGP…PPGRKGVKGA (325 aa)) is disordered. The segment covering 1455-1470 (EEGEVGEDGLDGLDGE) has biased composition (acidic residues). A compositionally biased stretch (basic and acidic residues) spans 1497–1507 (AAGDRGAKGLR). A Cell attachment site motif is present at residues 1507-1509 (RGD). A compositionally biased stretch (basic residues) spans 1546-1558 (SRRKMVVHGRRGH). Positions 1725–2265 (LASFSTCDLI…ATSKLGKRSA (541 aa)) are nonhelical region. 2 consecutive VWFA domains span residues 1756–1936 (ELVF…ERLQ) and 1964–2165 (DTAF…INSI). Positions 2186–2205 (SRDLKPPPRQFRSFVPGPQK) are disordered.

It belongs to the type VI collagen family. As to quaternary structure, trimers composed of three different chains: alpha-1(VI), alpha-2(VI), and alpha-3(VI) or alpha-4(VI) or alpha-5(VI) or alpha-6(VI). In terms of processing, prolines at the third position of the tripeptide repeating unit (G-X-Y) are hydroxylated in some or all of the chains. In terms of tissue distribution, in newborn, it is expressed in lung, heart, kidney, muscle, brain, intestine, skin, femur and sternum. In adult, it is expressed in lung, heart, muscle, ovary, brain, liver and sternum.

It localises to the secreted. Its subcellular location is the extracellular space. The protein localises to the extracellular matrix. Its function is as follows. Collagen VI acts as a cell-binding protein. This Mus musculus (Mouse) protein is Collagen alpha-6(VI) chain (Col6a6).